A 615-amino-acid polypeptide reads, in one-letter code: DNA mismatch repair protein MutL (615 aa).

It belongs to the DNA mismatch repair MutL/HexB family.

In terms of biological role, this protein is involved in the repair of mismatches in DNA. It is required for dam-dependent methyl-directed DNA mismatch repair. May act as a 'molecular matchmaker', a protein that promotes the formation of a stable complex between two or more DNA-binding proteins in an ATP-dependent manner without itself being part of a final effector complex. The chain is DNA mismatch repair protein MutL from Parabacteroides distasonis (strain ATCC 8503 / DSM 20701 / CIP 104284 / JCM 5825 / NCTC 11152).